A 571-amino-acid chain; its full sequence is Urease subunit alpha (571 aa).

Residues 133 to 571 (GGIDTHIHFV…LPLAQRYFLF (439 aa)) form the Urease domain. Ni(2+) is bound by residues His-138, His-140, and Lys-221. Lys-221 carries the post-translational modification N6-carboxylysine. Residue His-223 coordinates substrate. Ni(2+)-binding residues include His-250 and His-276. His-324 functions as the Proton donor in the catalytic mechanism. Asp-364 contacts Ni(2+).

The protein belongs to the metallo-dependent hydrolases superfamily. Urease alpha subunit family. In terms of assembly, heterotrimer of UreA (gamma), UreB (beta) and UreC (alpha) subunits. Three heterotrimers associate to form the active enzyme. Requires Ni cation as cofactor. Post-translationally, carboxylation allows a single lysine to coordinate two nickel ions.

The protein resides in the cytoplasm. The enzyme catalyses urea + 2 H2O + H(+) = hydrogencarbonate + 2 NH4(+). The protein operates within nitrogen metabolism; urea degradation; CO(2) and NH(3) from urea (urease route): step 1/1. This is Urease subunit alpha from Anaeromyxobacter sp. (strain K).